The sequence spans 405 residues: Tyrosine--tRNA ligase (405 aa).

Tyr-35 contributes to the L-tyrosine binding site. Positions 40–49 match the 'HIGH' region motif; the sequence is ATSSSLHIGH. The L-tyrosine site is built by Tyr-166 and Gln-170. The 'KMSKS' region motif lies at 226–230; it reads KMGKS. Lys-229 is a binding site for ATP. The region spanning 340-405 is the S4 RNA-binding domain; that stretch reads ILLVDLMLDS…GKKKFLRIVI (66 aa).

This sequence belongs to the class-I aminoacyl-tRNA synthetase family. TyrS type 1 subfamily. Homodimer.

It localises to the cytoplasm. The catalysed reaction is tRNA(Tyr) + L-tyrosine + ATP = L-tyrosyl-tRNA(Tyr) + AMP + diphosphate + H(+). Its function is as follows. Catalyzes the attachment of tyrosine to tRNA(Tyr) in a two-step reaction: tyrosine is first activated by ATP to form Tyr-AMP and then transferred to the acceptor end of tRNA(Tyr). The protein is Tyrosine--tRNA ligase of Borreliella burgdorferi (strain ATCC 35210 / DSM 4680 / CIP 102532 / B31) (Borrelia burgdorferi).